The following is a 188-amino-acid chain: Elongation factor P (188 aa).

Lysine 34 is modified (N6-(3,6-diaminohexanoyl)-5-hydroxylysine).

The protein belongs to the elongation factor P family. Post-translationally, may be beta-lysylated on the epsilon-amino group of Lys-34 by the combined action of EpmA and EpmB, and then hydroxylated on the C5 position of the same residue by EpmC (if this protein is present). Lysylation is critical for the stimulatory effect of EF-P on peptide-bond formation. The lysylation moiety may extend toward the peptidyltransferase center and stabilize the terminal 3-CCA end of the tRNA. Hydroxylation of the C5 position on Lys-34 may allow additional potential stabilizing hydrogen-bond interactions with the P-tRNA.

The protein localises to the cytoplasm. The protein operates within protein biosynthesis; polypeptide chain elongation. Involved in peptide bond synthesis. Alleviates ribosome stalling that occurs when 3 or more consecutive Pro residues or the sequence PPG is present in a protein, possibly by augmenting the peptidyl transferase activity of the ribosome. Modification of Lys-34 is required for alleviation. This is Elongation factor P from Enterobacter sp. (strain 638).